A 475-amino-acid chain; its full sequence is Deoxyguanosinetriphosphate triphosphohydrolase-like protein (475 aa).

The HD domain maps to 118 to 272; sequence RLTHTLEVAQ…MDLSDDIAYS (155 aa).

The protein belongs to the dGTPase family. Type 2 subfamily.

In Bifidobacterium longum (strain NCC 2705), this protein is Deoxyguanosinetriphosphate triphosphohydrolase-like protein (dgt).